A 607-amino-acid chain; its full sequence is Tyrosine-protein kinase RYK (607 aa).

Residues 1–20 form a disordered region; sequence MRGAARLGRPGRSCLPGARG. The signal sequence occupies residues 1–25; that stretch reads MRGAARLGRPGRSCLPGARGLRAPP. Residues 26-227 lie on the Extracellular side of the membrane; it reads PPPLLLLLAL…VHAAPTTSTR (202 aa). The WIF domain maps to 66-194; it reads LYLSEDEVRR…VLNFKRRKMC (129 aa). 5 N-linked (GlcNAc...) asparagine glycosylation sites follow: Asn-139, Asn-174, Asn-178, Asn-182, and Asn-209. Cys-159 and Cys-194 are joined by a disulfide. A helical membrane pass occupies residues 228 to 248; that stretch reads VFYISVGVCCAVIFLVAIILA. Topologically, residues 249–607 are cytoplasmic; that stretch reads VLHLHSMKRI…EFHAALGAYV (359 aa). Residues 266–282 show a composition bias toward low complexity; the sequence is ASSSSQGLSQPSTQTTQ. The segment at 266 to 290 is disordered; sequence ASSSSQGLSQPSTQTTQYLRADTPN. Positions 330 to 603 constitute a Protein kinase domain; the sequence is ITLKDVLQEG…QCLTEFHAAL (274 aa). ATP is bound by residues 336–344 and Lys-364; that span reads LQEGTFGRI. Asp-465 functions as the Proton acceptor in the catalytic mechanism. Tyr-495 carries the phosphotyrosine; by autocatalysis modification.

Belongs to the protein kinase superfamily. Tyr protein kinase family. As to quaternary structure, interacts with DVL1 (via PDZ domain). Post-translationally, proteolytically cleaved, in part by presenilin, in response to WNT3 stimulation. Cleavage occurs during neuronal differentiation. As to expression, observed in all the tissues examined.

Its subcellular location is the membrane. The protein resides in the nucleus. It localises to the cytoplasm. The enzyme catalyses L-tyrosyl-[protein] + ATP = O-phospho-L-tyrosyl-[protein] + ADP + H(+). In terms of biological role, may be a coreceptor along with FZD8 of Wnt proteins, such as WNT1, WNT3, WNT3A and WNT5A. Involved in neuron differentiation, axon guidance, corpus callosum establishment and neurite outgrowth. In response to WNT3 stimulation, receptor C-terminal cleavage occurs in its transmembrane region and allows the C-terminal intracellular product to translocate from the cytoplasm to the nucleus where it plays a crucial role in neuronal development. The protein is Tyrosine-protein kinase RYK of Homo sapiens (Human).